The primary structure comprises 539 residues: Carotene epsilon-monooxygenase, chloroplastic (539 aa).

Residues 1-36 (MESSLFSPSSSSYSSLFTAKPTRLLSPKPKFTFSIR) constitute a chloroplast transit peptide. Cys487 is a binding site for heme.

It belongs to the cytochrome P450 family. Requires heme as cofactor.

It is found in the plastid. The protein resides in the chloroplast. It catalyses the reaction alpha-carotene + reduced [NADPH--hemoprotein reductase] + O2 = alpha-cryptoxanthin + oxidized [NADPH--hemoprotein reductase] + H2O + H(+). The enzyme catalyses zeinoxanthin + reduced [NADPH--hemoprotein reductase] + O2 = lutein + oxidized [NADPH--hemoprotein reductase] + H2O + H(+). Heme-containing cytochrome P450 involved in the biosynthesis of xanthophylls. Specific for epsilon- and beta-ring hydroxylation of alpha-carotene. Has only a low activity toward the beta-rings of beta-carotene. The preferred substrate in planta is not alpha-carotene but the epsilon-ring of zeinoxanthin. Possesses a major beta-carotene hydroxylase activity in planta when depleted in its preferred substrate alpha-carotene. The chain is Carotene epsilon-monooxygenase, chloroplastic (CYP97C1) from Arabidopsis thaliana (Mouse-ear cress).